Reading from the N-terminus, the 207-residue chain is Large ribosomal subunit protein bL17m (207 aa).

The segment covering 173-200 (EKESEHARLKEDHEDEKTVKKDWKRGDP) has biased composition (basic and acidic residues). The interval 173 to 207 (EKESEHARLKEDHEDEKTVKKDWKRGDPIPRPTYI) is disordered.

It belongs to the bacterial ribosomal protein bL17 family. As to quaternary structure, component of the mitochondrial large ribosomal subunit (mt-LSU). Mature yeast 74S mitochondrial ribosomes consist of a small (37S) and a large (54S) subunit. The 37S small subunit contains a 15S ribosomal RNA (15S mt-rRNA) and at least 32 different proteins. The 54S large subunit contains a 21S rRNA (21S mt-rRNA) and at least 45 different proteins.

Its subcellular location is the mitochondrion. In terms of biological role, component of the mitochondrial ribosome (mitoribosome), a dedicated translation machinery responsible for the synthesis of mitochondrial genome-encoded proteins, including at least some of the essential transmembrane subunits of the mitochondrial respiratory chain. The mitoribosomes are attached to the mitochondrial inner membrane and translation products are cotranslationally integrated into the membrane. This Schizosaccharomyces pombe (strain 972 / ATCC 24843) (Fission yeast) protein is Large ribosomal subunit protein bL17m (mrpl8).